Reading from the N-terminus, the 291-residue chain is Homoserine kinase (291 aa).

80-90 is an ATP binding site; that stretch reads RPASGLGSSAA.

It belongs to the GHMP kinase family. Homoserine kinase subfamily.

It is found in the cytoplasm. The enzyme catalyses L-homoserine + ATP = O-phospho-L-homoserine + ADP + H(+). It participates in amino-acid biosynthesis; L-threonine biosynthesis; L-threonine from L-aspartate: step 4/5. Functionally, catalyzes the ATP-dependent phosphorylation of L-homoserine to L-homoserine phosphate. The protein is Homoserine kinase of Haloarcula marismortui (strain ATCC 43049 / DSM 3752 / JCM 8966 / VKM B-1809) (Halobacterium marismortui).